Consider the following 476-residue polypeptide: Glutathione synthetase (476 aa).

Position 117 (arginine 117) interacts with substrate. Glutamate 137 is an ATP binding site. Positions 137 and 139 each coordinate Mg(2+). Substrate contacts are provided by residues 141 to 144 (ISSS), 211 to 213 (ERN), glutamine 217, and 267 to 270 (RAGY). ATP is bound by residues lysine 308, 367 to 376 (KPQREGGGNN), tyrosine 378, 400 to 403 (MDKI), and glutamate 426. Residue glutamate 371 participates in Mg(2+) binding. Arginine 452 serves as a coordination point for substrate. Lysine 454 and glutamate 460 together coordinate ATP. Position 463 to 464 (463 to 464 (VA)) interacts with substrate.

This sequence belongs to the eukaryotic GSH synthase family. In terms of assembly, homodimer. Requires Mg(2+) as cofactor.

The catalysed reaction is gamma-L-glutamyl-L-cysteine + glycine + ATP = glutathione + ADP + phosphate + H(+). Its pathway is sulfur metabolism; glutathione biosynthesis; glutathione from L-cysteine and L-glutamate: step 2/2. The chain is Glutathione synthetase (gshB) from Dictyostelium discoideum (Social amoeba).